The sequence spans 446 residues: 5-hydroxytryptamine receptor 7 (446 aa).

At 1 to 84 the chain is on the extracellular side; it reads MMGVNSSGRP…INYGRAEKVV (84 aa). Residues asparagine 5 and asparagine 67 are each glycosylated (N-linked (GlcNAc...) asparagine). The chain crosses the membrane as a helical span at residues 85–109; that stretch reads IGSILTLITLLTIAGNCLVVISVCF. Over 110–119 the chain is Cytoplasmic; that stretch reads VKKLRQPSNY. The helical transmembrane segment at 120-141 threads the bilayer; that stretch reads LIVSLALADLSVAVAVIPFVSV. Over 142–153 the chain is Extracellular; it reads TDLIGGKWIFGH. The helical transmembrane segment at 154–179 threads the bilayer; sequence FFCNVFIAMDVMCCTASIMTLCVISI. Cysteine 156 and cysteine 232 are joined by a disulfide. Aspartate 163 contributes to the serotonin binding site. Residues 180–199 are Cytoplasmic-facing; that stretch reads DRYLGITRPLTYPVRQNGKC. The chain crosses the membrane as a helical span at residues 200–220; the sequence is MPKMILSVWLLSASITLPPLF. Topologically, residues 221–238 are extracellular; that stretch reads GWAQNVNDDKVCLISQDF. Residues 239–261 form a helical membrane-spanning segment; sequence GYTIYSTAVAFYIPMSVMLFMYY. The Cytoplasmic segment spans residues 262-327; sequence RIYKAARKSA…SIFKREQKAA (66 aa). The chain crosses the membrane as a helical span at residues 328–353; it reads TTLGIIVGAFTVCWLPFFLLSTARPF. At 354 to 364 the chain is on the extracellular side; sequence ICGTACSCIPL. A helical membrane pass occupies residues 365–388; it reads WVERTCLWLGYANSLINPFIYAFF. The Cytoplasmic segment spans residues 389 to 446; sequence NRDLRTTYRSLLQCQYRNINRKLSAAGMHEALKLAERPERPECVLQNSDYCRKKGHDS. Cysteine 402 is lipidated: S-palmitoyl cysteine.

It belongs to the G-protein coupled receptor 1 family.

The protein localises to the cell membrane. Functionally, G-protein coupled receptor for 5-hydroxytryptamine (serotonin), a biogenic hormone that functions as a neurotransmitter, a hormone and a mitogen. Ligand binding causes a conformation change that triggers signaling via guanine nucleotide-binding proteins (G proteins) and modulates the activity of downstream effectors. HTR7 is coupled to G(s) G alpha proteins and mediates activation of adenylate cyclase activity. In Cavia porcellus (Guinea pig), this protein is 5-hydroxytryptamine receptor 7 (HTR7).